A 220-amino-acid chain; its full sequence is Uracil-DNA glycosylase 1 (220 aa).

D65 (proton acceptor) is an active-site residue.

The protein belongs to the uracil-DNA glycosylase (UDG) superfamily. UNG family.

The protein localises to the cytoplasm. The enzyme catalyses Hydrolyzes single-stranded DNA or mismatched double-stranded DNA and polynucleotides, releasing free uracil.. In terms of biological role, excises uracil residues from the DNA which can arise as a result of misincorporation of dUMP residues by DNA polymerase or due to deamination of cytosine. This is Uracil-DNA glycosylase 1 from Bacteroides fragilis (strain ATCC 25285 / DSM 2151 / CCUG 4856 / JCM 11019 / LMG 10263 / NCTC 9343 / Onslow / VPI 2553 / EN-2).